A 417-amino-acid polypeptide reads, in one-letter code: MLEQMGKAAKAASYQLAVLSTAQKDRALLTIADLLEAESATILAANALDLADARQNGMSEALQDRLLLTQERLSAIASDVRQVCRLTDPVGQVIDGSMLDNGLKLERRRVPLGVVGVIYEARPNVTIDVASLCLKTGNAVILRGGKETYRTNAATVKVIQQALSQCGLPAAAVQAIESPDRELVNQLLKLDRYVDMLIPRGGAGLHKLCREQSTIPVITGGIGVCHIYADDSIDFDKALTVIESAKVQRPSACNSLETLLVNQRIADRFLPELSKKMAAAGVTLHASPSAMPYLTGGPASVVAVEEANYNDEWLSNDLNVTLVDDLDAAVAHIREHGTQHSDAILTRSLTNAERFVREVDSSAVYVNASTRFTDGGQFGLGAEVAVSTQKLHARGPMGLEALTTYKWIGYGDDLIRA.

This sequence belongs to the gamma-glutamyl phosphate reductase family.

Its subcellular location is the cytoplasm. It carries out the reaction L-glutamate 5-semialdehyde + phosphate + NADP(+) = L-glutamyl 5-phosphate + NADPH + H(+). Its pathway is amino-acid biosynthesis; L-proline biosynthesis; L-glutamate 5-semialdehyde from L-glutamate: step 2/2. In terms of biological role, catalyzes the NADPH-dependent reduction of L-glutamate 5-phosphate into L-glutamate 5-semialdehyde and phosphate. The product spontaneously undergoes cyclization to form 1-pyrroline-5-carboxylate. This chain is Gamma-glutamyl phosphate reductase, found in Pectobacterium carotovorum subsp. carotovorum (strain PC1).